Here is a 412-residue protein sequence, read N- to C-terminus: Phosphate-repressible acid phosphatase (412 aa).

The first 19 residues, methionine 1 to glycine 19, serve as a signal peptide directing secretion. N-linked (GlcNAc...) asparagine glycans are attached at residues asparagine 74, asparagine 121, asparagine 186, and asparagine 208. The active-site Proton donor is the aspartate 215. Asparagine 217, asparagine 332, and asparagine 343 each carry an N-linked (GlcNAc...) asparagine glycan.

The N-terminus is blocked.

The protein resides in the secreted. It catalyses the reaction a phosphate monoester + H2O = an alcohol + phosphate. This chain is Phosphate-repressible acid phosphatase (PHOA), found in Penicillium chrysogenum (Penicillium notatum).